Here is a 502-residue protein sequence, read N- to C-terminus: Probable malate:quinone oxidoreductase 1 (502 aa).

The protein belongs to the MQO family. The cofactor is FAD.

It catalyses the reaction (S)-malate + a quinone = a quinol + oxaloacetate. It functions in the pathway carbohydrate metabolism; tricarboxylic acid cycle; oxaloacetate from (S)-malate (quinone route): step 1/1. In Pseudomonas putida (strain ATCC 47054 / DSM 6125 / CFBP 8728 / NCIMB 11950 / KT2440), this protein is Probable malate:quinone oxidoreductase 1.